The sequence spans 274 residues: 2,3,4,5-tetrahydropyridine-2,6-dicarboxylate N-succinyltransferase (274 aa).

R104 and D141 together coordinate substrate.

It belongs to the transferase hexapeptide repeat family. Homotrimer.

The protein localises to the cytoplasm. It catalyses the reaction (S)-2,3,4,5-tetrahydrodipicolinate + succinyl-CoA + H2O = (S)-2-succinylamino-6-oxoheptanedioate + CoA. It functions in the pathway amino-acid biosynthesis; L-lysine biosynthesis via DAP pathway; LL-2,6-diaminopimelate from (S)-tetrahydrodipicolinate (succinylase route): step 1/3. The polypeptide is 2,3,4,5-tetrahydropyridine-2,6-dicarboxylate N-succinyltransferase (Shewanella sediminis (strain HAW-EB3)).